A 525-amino-acid polypeptide reads, in one-letter code: Ribosomal protein S6 kinase beta-1 (525 aa).

Residues 1 to 54 are disordered; sequence MRRRRRRDGFYPAPDFRDREAEDMAGVFDIDLDQPEDAGSEDELEEGGQLNESM. The TOS motif motif lies at 28–32; sequence FDIDL. Residues 30-46 are compositionally biased toward acidic residues; sequence IDLDQPEDAGSEDELEE. The Protein kinase domain maps to 91 to 352; that stretch reads FELLRVLGKG…AGEVQAHPFF (262 aa). Residues 97–105 and lysine 123 each bind ATP; that span reads LGKGGYGKV. The active-site Proton acceptor is aspartate 218. Threonine 252 is modified (phosphothreonine; by PDPK1). Positions 353-423 constitute an AGC-kinase C-terminal domain; it reads RHINWEELLA…VAPSVLESVK (71 aa). The tract at residues 380–399 is disordered; it reads SQFDSKFTRQTPVDSPDDST. Polar residues predominate over residues 381-399; it reads QFDSKFTRQTPVDSPDDST. The residue at position 394 (serine 394) is a Phosphoserine. Phosphothreonine; by MTOR, NEK6 and NEK7 is present on threonine 412. Residues 424-525 form an autoinhibitory domain region; the sequence is EKFSFEPKIR…KRPEHLRMNL (102 aa). Serine 434 and serine 441 each carry phosphoserine. Threonine 444 carries the post-translational modification Phosphothreonine. 2 positions are modified to phosphoserine: serine 447 and serine 452. Lysine 516 carries the N6-acetyllysine modification.

It belongs to the protein kinase superfamily. AGC Ser/Thr protein kinase family. S6 kinase subfamily. In terms of assembly, interacts with PPP1R9A/neurabin-1. Interacts with RPTOR. Interacts with IRS1. Interacts with EIF3B and EIF3C. Interacts with TRAF4. Interacts with POLDIP3. Interacts (via N-terminus) with IER5. (Microbial infection) Interacts with Mumps virus phosphoprotein; this interaction may play a role in the viral replication and transcription. Post-translationally, phosphorylation at Thr-412 is regulated by mTORC1. The phosphorylation at this site is maintained by an agonist-dependent autophosphorylation mechanism. Activated by phosphorylation at Thr-252 by PDPK1. Dephosphorylation by PPP1CC at Thr-412 in mitochondrion. Widely expressed.

It localises to the synapse. The protein localises to the synaptosome. Its subcellular location is the mitochondrion outer membrane. It is found in the mitochondrion. The protein resides in the nucleus. It localises to the cytoplasm. It carries out the reaction L-seryl-[protein] + ATP = O-phospho-L-seryl-[protein] + ADP + H(+). The catalysed reaction is L-threonyl-[protein] + ATP = O-phospho-L-threonyl-[protein] + ADP + H(+). Its activity is regulated as follows. Activation requires multiple phosphorylation events on serine/threonine residues. Activation appears to be first mediated by phosphorylation of multiple sites in the autoinhibitory domain, which facilitates phosphorylation at Thr-412, disrupting the autoinhibitory mechanism and allowing phosphorylation of Thr-252 by PDPK1. The active conformation of the kinase is believed to be stabilized by a mechanism involving three conserved phosphorylation sites located in the kinase domain activation loop (Thr-252) and in the AGC-kinase C-terminal domain (Ser-394 in the middle of the tail/linker region and Thr-412 within a hydrophobic motif at its end). Activated by mTORC1; isoform Alpha I and isoform Alpha II are sensitive to rapamycin, which inhibits activating phosphorylation at Thr-412. Activated by PDPK1. Functionally, serine/threonine-protein kinase that acts downstream of mTOR signaling in response to growth factors and nutrients to promote cell proliferation, cell growth and cell cycle progression. Regulates protein synthesis through phosphorylation of EIF4B, RPS6 and EEF2K, and contributes to cell survival by repressing the pro-apoptotic function of BAD. Under conditions of nutrient depletion, the inactive form associates with the EIF3 translation initiation complex. Upon mitogenic stimulation, phosphorylation by the mechanistic target of rapamycin complex 1 (mTORC1) leads to dissociation from the EIF3 complex and activation. The active form then phosphorylates and activates several substrates in the pre-initiation complex, including the EIF2B complex and the cap-binding complex component EIF4B. Also controls translation initiation by phosphorylating a negative regulator of EIF4A, PDCD4, targeting it for ubiquitination and subsequent proteolysis. Promotes initiation of the pioneer round of protein synthesis by phosphorylating POLDIP3/SKAR. In response to IGF1, activates translation elongation by phosphorylating EEF2 kinase (EEF2K), which leads to its inhibition and thus activation of EEF2. Also plays a role in feedback regulation of mTORC2 by mTORC1 by phosphorylating MAPKAP1/SIN1, MTOR and RICTOR, resulting in the inhibition of mTORC2 and AKT1 signaling. Also involved in feedback regulation of mTORC1 and mTORC2 by phosphorylating DEPTOR. Mediates cell survival by phosphorylating the pro-apoptotic protein BAD and suppressing its pro-apoptotic function. Phosphorylates mitochondrial URI1 leading to dissociation of a URI1-PPP1CC complex. The free mitochondrial PPP1CC can then dephosphorylate RPS6KB1 at Thr-412, which is proposed to be a negative feedback mechanism for the RPS6KB1 anti-apoptotic function. Mediates TNF-alpha-induced insulin resistance by phosphorylating IRS1 at multiple serine residues, resulting in accelerated degradation of IRS1. In cells lacking functional TSC1-2 complex, constitutively phosphorylates and inhibits GSK3B. May be involved in cytoskeletal rearrangement through binding to neurabin. Phosphorylates and activates the pyrimidine biosynthesis enzyme CAD, downstream of MTOR. Following activation by mTORC1, phosphorylates EPRS and thereby plays a key role in fatty acid uptake by adipocytes and also most probably in interferon-gamma-induced translation inhibition. The chain is Ribosomal protein S6 kinase beta-1 (RPS6KB1) from Homo sapiens (Human).